A 362-amino-acid polypeptide reads, in one-letter code: Putative membrane-bound acyltransferase YfiQ (362 aa).

The next 10 helical transmembrane spans lie at 11-31, 44-64, 82-102, 119-139, 153-173, 181-201, 220-240, 252-267, 283-303, and 308-328; these read CISCLSVVLLHIISMVLMLQA, FRTLLMFSTPAFIFISEFLLA, VIFVPFLFIAAIDALLMTSAM, VFLGNFIGYFILVIFQFYMLH, WVLSISFVVTAAYLGYFSAAS, GGAFPFFWVPFAGWLFYFCLA, WVVYGAAIASGALVVTVSYVG, IMLYSTSMIFLCFHLF, YSFSIYLLHAYFMIIGYVLLL, and IPAVPAVLLLFAVCTAGPIMT.

Belongs to the acyltransferase 3 family.

It localises to the cell membrane. The protein is Putative membrane-bound acyltransferase YfiQ (yfiQ) of Bacillus subtilis (strain 168).